Consider the following 541-residue polypeptide: Protopine 6-monooxygenase (541 aa).

The helical transmembrane segment at 9-29 threads the bilayer; the sequence is LLLNTWISAYSMAALLALVLV. C476 contributes to the heme binding site.

It belongs to the cytochrome P450 family. It depends on heme as a cofactor.

The protein localises to the endoplasmic reticulum membrane. It carries out the reaction protopine + reduced [NADPH--hemoprotein reductase] + O2 = 6-hydroxyprotopine + oxidized [NADPH--hemoprotein reductase] + H2O + H(+). It functions in the pathway alkaloid biosynthesis. Its function is as follows. Catalyzes the conversion of protopine and allocryptopine to dihydrosanguinarine and dihydrochelerythrine, respectively, in the biosynthesis of isoquinoline alkaloid sanguinarine. The sequence is that of Protopine 6-monooxygenase (CYP82N3) from Papaver somniferum (Opium poppy).